Here is a 525-residue protein sequence, read N- to C-terminus: Glucose-6-phosphate isomerase (525 aa).

Glu347 acts as the Proton donor in catalysis. Active-site residues include His378 and Lys493.

This sequence belongs to the GPI family.

It is found in the cytoplasm. The enzyme catalyses alpha-D-glucose 6-phosphate = beta-D-fructose 6-phosphate. Its pathway is carbohydrate biosynthesis; gluconeogenesis. It participates in carbohydrate degradation; glycolysis; D-glyceraldehyde 3-phosphate and glycerone phosphate from D-glucose: step 2/4. Functionally, catalyzes the reversible isomerization of glucose-6-phosphate to fructose-6-phosphate. This chain is Glucose-6-phosphate isomerase, found in Chlamydia trachomatis serovar L2 (strain ATCC VR-902B / DSM 19102 / 434/Bu).